Here is a 206-residue protein sequence, read N- to C-terminus: Large ribosomal subunit protein uL4 (206 aa).

The interval 47–94 is disordered; that stretch reads NRAQKGRAEVSKSTRKPWRQKGTGRARAGMASSPLWRGGGRVFPNSPE. A compositionally biased stretch (basic residues) spans 59–70; sequence STRKPWRQKGTG.

The protein belongs to the universal ribosomal protein uL4 family. In terms of assembly, part of the 50S ribosomal subunit.

One of the primary rRNA binding proteins, this protein initially binds near the 5'-end of the 23S rRNA. It is important during the early stages of 50S assembly. It makes multiple contacts with different domains of the 23S rRNA in the assembled 50S subunit and ribosome. Functionally, forms part of the polypeptide exit tunnel. This chain is Large ribosomal subunit protein uL4, found in Aromatoleum aromaticum (strain DSM 19018 / LMG 30748 / EbN1) (Azoarcus sp. (strain EbN1)).